We begin with the raw amino-acid sequence, 569 residues long: Proline--tRNA ligase (569 aa).

Belongs to the class-II aminoacyl-tRNA synthetase family. ProS type 1 subfamily. As to quaternary structure, homodimer.

Its subcellular location is the cytoplasm. It catalyses the reaction tRNA(Pro) + L-proline + ATP = L-prolyl-tRNA(Pro) + AMP + diphosphate. Its function is as follows. Catalyzes the attachment of proline to tRNA(Pro) in a two-step reaction: proline is first activated by ATP to form Pro-AMP and then transferred to the acceptor end of tRNA(Pro). As ProRS can inadvertently accommodate and process non-cognate amino acids such as alanine and cysteine, to avoid such errors it has two additional distinct editing activities against alanine. One activity is designated as 'pretransfer' editing and involves the tRNA(Pro)-independent hydrolysis of activated Ala-AMP. The other activity is designated 'posttransfer' editing and involves deacylation of mischarged Ala-tRNA(Pro). The misacylated Cys-tRNA(Pro) is not edited by ProRS. This is Proline--tRNA ligase from Endomicrobium trichonymphae.